Consider the following 430-residue polypeptide: Tol-Pal system protein TolB (430 aa).

Positions 1-21 (MKQAFRVALGFLVLWASVLHA) are cleaved as a signal peptide.

The protein belongs to the TolB family. The Tol-Pal system is composed of five core proteins: the inner membrane proteins TolA, TolQ and TolR, the periplasmic protein TolB and the outer membrane protein Pal. They form a network linking the inner and outer membranes and the peptidoglycan layer.

It localises to the periplasm. Its function is as follows. Part of the Tol-Pal system, which plays a role in outer membrane invagination during cell division and is important for maintaining outer membrane integrity. TolB occupies a key intermediary position in the Tol-Pal system because it communicates directly with both membrane-embedded components, Pal in the outer membrane and TolA in the inner membrane. The chain is Tol-Pal system protein TolB from Yersinia pestis.